A 288-amino-acid polypeptide reads, in one-letter code: UTP--glucose-1-phosphate uridylyltransferase (288 aa).

This sequence belongs to the UDPGP type 2 family.

It catalyses the reaction alpha-D-glucose 1-phosphate + UTP + H(+) = UDP-alpha-D-glucose + diphosphate. It participates in glycolipid metabolism; diglucosyl-diacylglycerol biosynthesis. In terms of biological role, catalyzes the formation of UDP-glucose from glucose-1-phosphate and UTP. This is an intermediate step in the biosynthesis of diglucosyl-diacylglycerol (Glc2-DAG), i.e. a glycolipid found in the membrane, which is also used as a membrane anchor for lipoteichoic acid (LTA). In Staphylococcus haemolyticus (strain JCSC1435), this protein is UTP--glucose-1-phosphate uridylyltransferase (gtaB).